Here is a 320-residue protein sequence, read N- to C-terminus: Copper chaperone for superoxide dismutase, chloroplastic/cytosolic (320 aa).

Residues 1–67 (MASILRSVAT…LSRSFVSSPM (67 aa)) constitute a chloroplast transit peptide. Residues 86 to 149 (QLLTEFMVDM…ALEQTGRKAR (64 aa)) enclose the HMA domain. Residues C97, C100, C300, and C302 each coordinate Cu cation.

This sequence in the C-terminal section; belongs to the Cu-Zn superoxide dismutase family. As to quaternary structure, interacts with CSD1. Requires Cu(2+) as cofactor. Expressed in roots, shoots, stems and flowers, and at lower levels in rosette and cauline leaves.

The protein resides in the plastid. It localises to the chloroplast. Its subcellular location is the cytoplasm. It is found in the cytosol. Its function is as follows. Copper chaperone for the superoxide dismutases CSD1, CSD2 and CSD3. Binds copper ions and delivers them specifically to CSDs. Is required for assistance in CSDs disulfide bond formation and thereby activation of CSDs. May be involved in the negative regulation of heat stress-responsive genes and thermotolerance. The protein is Copper chaperone for superoxide dismutase, chloroplastic/cytosolic (CCS) of Arabidopsis thaliana (Mouse-ear cress).